A 394-amino-acid chain; its full sequence is Alcohol dehydrogenase-like 3 (394 aa).

Zn(2+)-binding residues include cysteine 48, threonine 50, histidine 71, cysteine 101, cysteine 104, cysteine 107, cysteine 115, and cysteine 188. An alcohol-binding residues include threonine 50 and histidine 71. Threonine 50 contacts NAD(+). NAD(+)-binding positions include 213–218, aspartate 237, lysine 242, threonine 283, valine 306, 306–308, phenylalanine 333, and arginine 383; these read GLGSVG and VGI.

The protein belongs to the zinc-containing alcohol dehydrogenase family. Class-III subfamily. Homodimer. The cofactor is Zn(2+).

Its subcellular location is the cytoplasm. The catalysed reaction is a primary alcohol + NAD(+) = an aldehyde + NADH + H(+). The enzyme catalyses a secondary alcohol + NAD(+) = a ketone + NADH + H(+). The protein is Alcohol dehydrogenase-like 3 of Arabidopsis thaliana (Mouse-ear cress).